A 383-amino-acid polypeptide reads, in one-letter code: MGTQPSYSIHTLRAPPKAKQNQIPPSTTRRAVNVNKLGRQFRYPSVGMFTPEMAKRLAALVKMEKDLLRSYENVAMERKECANQLSYWGEDCDDDISDISDKLGVLLYEIGELEEHMVDRYDQYRVSLKTIRDIEASVQPTRVKKEKLLNSIYDVRSRDPESPKLITMEQELVREEAACLVAEAQLTNITRENFKRAFTLHIGTLLEHSEKVAILCGYAKKILDLLDDTPIVPGEPRPIYDGYNITRDYIVEAERELANWQNPFQTPEPLTDIDGLPSQSHYQTQFQASVVPRTDVINEPPRRYSHANGVTTSGTTHSYTSTGSKRYSQMGTEDYQPSFQPNILQSTQVVDNFEIGEEDDEEVGSQGVAETSMPSTSAQPIAA.

Ser162 is modified (phosphoserine). 2 disordered regions span residues 292–336 (PRTD…EDYQ) and 356–383 (GEEDDEEVGSQGVAETSMPSTSAQPIAA). A compositionally biased stretch (low complexity) spans 311–324 (TTSGTTHSYTSTGS). Polar residues-rich tracts occupy residues 325 to 336 (KRYSQMGTEDYQ) and 368 to 383 (VAETSMPSTSAQPIAA).

In terms of processing, phosphorylated by ksg1 and ppk21. Phosphorylation is regulated by sphingolipid long chain bases (LCBs).

In terms of biological role, negative regulator of cell wall integrity (CWI) in unstressed cells, probably by inhibiting protein kinase ksg1/ppk21 activity and regulating their downstream CWI pathways pck2-MAP kinase pathway and protein kinase gad8 pathway. Activity may be regulated by the transient increase of sphingolipid long chain bases (LCBs) during heat stress. In Schizosaccharomyces pombe (strain 972 / ATCC 24843) (Fission yeast), this protein is Probable sphingolipid long chain base-responsive protein pil2 (pil2).